The primary structure comprises 1050 residues: Mitotic checkpoint serine/threonine-protein kinase BUB1 beta (1050 aa).

The region spanning 62-226 is the BUB1 N-terminal domain; that stretch reads FEYEIRFYTG…FESSVPQRST (165 aa). The short motif at 111-118 is the Nuclear localization signal element; that stretch reads GEKRYYSD. The tract at residues 152 to 185 is necessary for interaction with KNL1; sequence AQFYISWAEEYEARENFRKADAIFQEGIQQKAEP. The D-box motif lies at 224–232; that stretch reads RSTLAELKS. The residue at position 250 (Lys-250) is an N6-acetyllysine; by PCAF. At Ser-367 the chain carries Phosphoserine. The segment at 368–393 is disordered; the sequence is TRKPGKEEGDPLQRVQSHQQASEEKK. Ser-435 carries the post-translational modification Phosphoserine. A disordered region spans residues 456-480; that stretch reads IQTTQQERTGDQQEETMPTKETTKL. Ser-543, Ser-665, and Ser-670 each carry phosphoserine. Position 676 is a phosphoserine; by PLK1 (Ser-676). The residue at position 697 (Ser-697) is a Phosphoserine. A Protein kinase domain is found at 766 to 1050; the sequence is YCIKREYLIC…LTSPGALLFQ (285 aa). 772–780 contributes to the ATP binding site; that stretch reads YLICEDYKL. Position 792 is a phosphothreonine; by PLK1 (Thr-792). Lys-795 provides a ligand contact to ATP. Catalysis depends on Asp-882, which acts as the Proton acceptor. The residue at position 1008 (Thr-1008) is a Phosphothreonine; by PLK1. Thr-1042 is modified (phosphothreonine). The residue at position 1043 (Ser-1043) is a Phosphoserine.

This sequence belongs to the protein kinase superfamily. Ser/Thr protein kinase family. BUB1 subfamily. As to quaternary structure, interacts with CENPE. Interacts with PLK1. Part of a complex containing BUB3, CDC20 and BUB1B. Interacts with anaphase-promoting complex/cyclosome (APC/C). Interacts with KNL1. Interacts with KAT2B. Interacts with RIPK3. Interacts with the closed conformation form of MAD2L1. In terms of processing, proteolytically cleaved by caspase-3 in a cell cycle specific manner. The cleavage might be involved in the durability of the cell cycle delay. Caspase-3 cleavage is associated with abrogation of the mitotic checkpoint. The major site of cleavage is at Asp-610. Acetylation at Lys-250 regulates its degradation and timing in anaphase entry. Post-translationally, ubiquitinated. Degraded by the proteasome. Ubiquitinated by UBR5, promoting disassembly of the mitotic checkpoint complex from the APC/C complex. In terms of processing, sumoylated with SUMO2 and SUMO3. The sumoylation mediates the association with CENPE at the kinetochore. Autophosphorylated in vitro. Intramolecular autophosphorylation is stimulated by CENPE. Phosphorylated during mitosis and hyperphosphorylated in mitotically arrested cells. Phosphorylation at Ser-670 and Ser-1043 occurs at kinetochores upon mitotic entry with dephosphorylation at the onset of anaphase. As to expression, highly expressed in thymus followed by spleen. Preferentially expressed in tissues with a high mitotic index.

The protein localises to the cytoplasm. It localises to the nucleus. Its subcellular location is the chromosome. The protein resides in the centromere. It is found in the kinetochore. The protein localises to the cytoskeleton. It localises to the microtubule organizing center. Its subcellular location is the centrosome. It catalyses the reaction L-seryl-[protein] + ATP = O-phospho-L-seryl-[protein] + ADP + H(+). It carries out the reaction L-threonyl-[protein] + ATP = O-phospho-L-threonyl-[protein] + ADP + H(+). With respect to regulation, kinase activity stimulated by CENPE. Functionally, essential component of the mitotic checkpoint. Required for normal mitosis progression. The mitotic checkpoint delays anaphase until all chromosomes are properly attached to the mitotic spindle. One of its checkpoint functions is to inhibit the activity of the anaphase-promoting complex/cyclosome (APC/C) by blocking the binding of CDC20 to APC/C, independently of its kinase activity. The other is to monitor kinetochore activities that depend on the kinetochore motor CENPE. Required for kinetochore localization of CENPE. Negatively regulates PLK1 activity in interphase cells and suppresses centrosome amplification. Also implicated in triggering apoptosis in polyploid cells that exit aberrantly from mitotic arrest. May play a role for tumor suppression. This is Mitotic checkpoint serine/threonine-protein kinase BUB1 beta (BUB1B) from Homo sapiens (Human).